Here is a 995-residue protein sequence, read N- to C-terminus: Epididymis-specific alpha-mannosidase (995 aa).

The N-terminal stretch at 1 to 21 (MGPHSWLPLFMQLALLGPQWA) is a signal peptide. The Zn(2+) site is built by H36, D38, and D151. The active-site Nucleophile is D151. N-linked (GlcNAc...) asparagine glycosylation is present at N285. H411 serves as a coordination point for Zn(2+). N593, N625, N657, N733, N793, N875, and N977 each carry an N-linked (GlcNAc...) asparagine glycan. The segment at 956–977 (TEDGHHHRGSSRRPLPPLRGPN) is disordered.

Belongs to the glycosyl hydrolase 38 family. Requires Zn(2+) as cofactor. Post-translationally, processed into a 27 kDa fragment localized on the equatorial segment and the apical rim of the head of mature sperm. As to expression, specific to the caput and corpus of the epididymis.

It is found in the secreted. It carries out the reaction Hydrolysis of terminal, non-reducing alpha-D-mannose residues in alpha-D-mannosides.. In terms of biological role, can digest both p-nitro-phenyl-alpha-D-mannoside and high mannose oligosaccharide (Man(8)-GlcNAc(2)). May be involved in sperm maturation. Has a possible role in specific sperm-egg interaction since sperm surface mannosidase acts like a receptor for mannose-containing oligosaccharides located on the zona pellucida. This Sus scrofa (Pig) protein is Epididymis-specific alpha-mannosidase (MAN2B2).